The following is a 157-amino-acid chain: 2-C-methyl-D-erythritol 2,4-cyclodiphosphate synthase (157 aa).

Aspartate 8 and histidine 10 together coordinate a divalent metal cation. Residues 8–10 (DVH) and 34–35 (HS) contribute to the 4-CDP-2-C-methyl-D-erythritol 2-phosphate site. A divalent metal cation is bound at residue histidine 42. 4-CDP-2-C-methyl-D-erythritol 2-phosphate is bound by residues 56 to 58 (DIG), 61 to 65 (FPDTD), 100 to 106 (AQKPKMA), 132 to 135 (TTTE), and phenylalanine 139.

This sequence belongs to the IspF family. In terms of assembly, homotrimer. Requires a divalent metal cation as cofactor.

The catalysed reaction is 4-CDP-2-C-methyl-D-erythritol 2-phosphate = 2-C-methyl-D-erythritol 2,4-cyclic diphosphate + CMP. The protein operates within isoprenoid biosynthesis; isopentenyl diphosphate biosynthesis via DXP pathway; isopentenyl diphosphate from 1-deoxy-D-xylulose 5-phosphate: step 4/6. Functionally, involved in the biosynthesis of isopentenyl diphosphate (IPP) and dimethylallyl diphosphate (DMAPP), two major building blocks of isoprenoid compounds. Catalyzes the conversion of 4-diphosphocytidyl-2-C-methyl-D-erythritol 2-phosphate (CDP-ME2P) to 2-C-methyl-D-erythritol 2,4-cyclodiphosphate (ME-CPP) with a corresponding release of cytidine 5-monophosphate (CMP). This chain is 2-C-methyl-D-erythritol 2,4-cyclodiphosphate synthase, found in Alkaliphilus oremlandii (strain OhILAs) (Clostridium oremlandii (strain OhILAs)).